Reading from the N-terminus, the 297-residue chain is N-acetylmuramic acid 6-phosphate etherase (297 aa).

Residues 56–219 enclose the SIS domain; sequence AIEAFNKGGR…STISMIGIGK (164 aa). Glu84 functions as the Proton donor in the catalytic mechanism. Glu115 is an active-site residue.

This sequence belongs to the GCKR-like family. MurNAc-6-P etherase subfamily. In terms of assembly, homodimer.

The enzyme catalyses N-acetyl-D-muramate 6-phosphate + H2O = N-acetyl-D-glucosamine 6-phosphate + (R)-lactate. Its pathway is amino-sugar metabolism; N-acetylmuramate degradation. Specifically catalyzes the cleavage of the D-lactyl ether substituent of MurNAc 6-phosphate, producing GlcNAc 6-phosphate and D-lactate. The sequence is that of N-acetylmuramic acid 6-phosphate etherase from Lactococcus lactis subsp. cremoris (strain SK11).